The primary structure comprises 153 residues: Ribosome maturation factor RimP (153 aa).

This sequence belongs to the RimP family.

It localises to the cytoplasm. Functionally, required for maturation of 30S ribosomal subunits. The chain is Ribosome maturation factor RimP from Coxiella burnetii (strain Dugway 5J108-111).